Reading from the N-terminus, the 876-residue chain is Alanine--tRNA ligase (876 aa).

Lys74 bears the N6-acetyllysine mark. The Zn(2+) site is built by His564, His568, Cys666, and His670.

It belongs to the class-II aminoacyl-tRNA synthetase family. As to quaternary structure, homotetramer. Zn(2+) serves as cofactor.

The protein resides in the cytoplasm. It carries out the reaction tRNA(Ala) + L-alanine + ATP = L-alanyl-tRNA(Ala) + AMP + diphosphate. Functionally, catalyzes the attachment of alanine to tRNA(Ala) in a two-step reaction: alanine is first activated by ATP to form Ala-AMP and then transferred to the acceptor end of tRNA(Ala). Also edits incorrectly charged Ser-tRNA(Ala) and Gly-tRNA(Ala) via its editing domain. The polypeptide is Alanine--tRNA ligase (Escherichia coli O6:K15:H31 (strain 536 / UPEC)).